The following is a 527-amino-acid chain: Estrogen receptor beta (527 aa).

Residues 1-145 are modulating; that stretch reads MDVKNSPSSL…SPSSKRDAHF (145 aa). 2 positions are modified to phosphoserine; by MAPK: Ser84 and Ser102. 2 NR C4-type zinc fingers span residues 146–166 and 182–206; these read CAVC…CEGC and CPAT…LRKC. The nuclear receptor DNA-binding region spans 146–211; the sequence is CAVCSDYASG…RLRKCYEVGM (66 aa). One can recognise an NR LBD domain in the interval 261-495; it reads SPEQLVLTLL…DLLLEMLNAH (235 aa).

It belongs to the nuclear hormone receptor family. NR3 subfamily. Binds DNA as a homodimer. Can form a heterodimer with ESR1. Interacts with NCOA1, NCOA3, NCOA5 and NCOA6 coactivators, leading to a strong increase of transcription of target genes. Interacts with UBE1C and AKAP13. Interacts with DNTTIP2. Interacts with CCDC62 in the presence of estradiol/E2; this interaction seems to enhance the transcription of target genes. Interacts with DNAAF4. Interacts with PRMT2. Interacts with CCAR2 (via N-terminus) in a ligand-independent manner. Interacts with RBM39, in the presence of estradiol (E2). Interacts with STUB1/CHIP. Post-translationally, phosphorylation at Ser-84 and Ser-102 recruits NCOA1. As to expression, present in granulosa cells of antral follicles in various stages of follicular growth.

It is found in the nucleus. Its function is as follows. Nuclear hormone receptor. Binds estrogens with an affinity similar to that of ESR1ESR1/ER-alpha, and activates expression of reporter genes containing estrogen response elements (ERE) in an estrogen-dependent manner. The sequence is that of Estrogen receptor beta (ESR2) from Bos taurus (Bovine).